Consider the following 357-residue polypeptide: DNA primase small subunit PriS (357 aa).

Residues Asp-105, Asp-107, and Asp-259 contribute to the active site.

Belongs to the eukaryotic-type primase small subunit family. Heterodimer of a small subunit (PriS) and a large subunit (PriL). The cofactor is Mg(2+). Requires Mn(2+) as cofactor.

Its function is as follows. Catalytic subunit of DNA primase, an RNA polymerase that catalyzes the synthesis of short RNA molecules used as primers for DNA polymerase during DNA replication. The small subunit contains the primase catalytic core and has DNA synthesis activity on its own. Binding to the large subunit stabilizes and modulates the activity, increasing the rate of DNA synthesis while decreasing the length of the DNA fragments, and conferring RNA synthesis capability. The DNA polymerase activity may enable DNA primase to also catalyze primer extension after primer synthesis. May also play a role in DNA repair. The sequence is that of DNA primase small subunit PriS from Methanococcus maripaludis (strain DSM 14266 / JCM 13030 / NBRC 101832 / S2 / LL).